Consider the following 320-residue polypeptide: Cytochrome f (320 aa).

An N-terminal signal peptide occupies residues 1–35 (MQTRNTFSWIKEEITRSISVSLMIYIITGASISNA). Heme contacts are provided by Tyr36, Cys56, Cys59, and His60. The helical transmembrane segment at 286–306 (VQGLLFFLASIVFAQIFLVLK) threads the bilayer.

It belongs to the cytochrome f family. The 4 large subunits of the cytochrome b6-f complex are cytochrome b6, subunit IV (17 kDa polypeptide, petD), cytochrome f and the Rieske protein, while the 4 small subunits are PetG, PetL, PetM and PetN. The complex functions as a dimer. Requires heme as cofactor.

Its subcellular location is the plastid. The protein localises to the chloroplast thylakoid membrane. Its function is as follows. Component of the cytochrome b6-f complex, which mediates electron transfer between photosystem II (PSII) and photosystem I (PSI), cyclic electron flow around PSI, and state transitions. The protein is Cytochrome f of Gossypium hirsutum (Upland cotton).